We begin with the raw amino-acid sequence, 236 residues long: Phosphoglycolate phosphatase (236 aa).

D23 acts as the Nucleophile in catalysis. Residues D23 and D25 each coordinate Mg(2+). K162 serves as a coordination point for substrate. Residues D185 and D189 each contribute to the Mg(2+) site.

This sequence belongs to the archaeal SPP-like hydrolase family. Mg(2+) is required as a cofactor.

The enzyme catalyses 2-phosphoglycolate + H2O = glycolate + phosphate. Functionally, catalyzes the dephosphorylation of 2-phosphoglycolate. The sequence is that of Phosphoglycolate phosphatase from Picrophilus torridus (strain ATCC 700027 / DSM 9790 / JCM 10055 / NBRC 100828 / KAW 2/3).